The primary structure comprises 445 residues: Glutamyl-tRNA(Gln) amidotransferase subunit D (445 aa).

Positions 93-425 constitute an Asparaginase/glutaminase domain; that stretch reads SEIKIISTGG…EKIRSLMISN (333 aa). Residues T103, T179, D180, and K258 contribute to the active site.

This sequence belongs to the asparaginase 1 family. GatD subfamily. As to quaternary structure, heterodimer of GatD and GatE.

It catalyses the reaction L-glutamyl-tRNA(Gln) + L-glutamine + ATP + H2O = L-glutaminyl-tRNA(Gln) + L-glutamate + ADP + phosphate + H(+). Functionally, allows the formation of correctly charged Gln-tRNA(Gln) through the transamidation of misacylated Glu-tRNA(Gln) in organisms which lack glutaminyl-tRNA synthetase. The reaction takes place in the presence of glutamine and ATP through an activated gamma-phospho-Glu-tRNA(Gln). The GatDE system is specific for glutamate and does not act on aspartate. In Saccharolobus islandicus (strain L.S.2.15 / Lassen #1) (Sulfolobus islandicus), this protein is Glutamyl-tRNA(Gln) amidotransferase subunit D.